We begin with the raw amino-acid sequence, 329 residues long: 31 kDa immunogenic protein (329 aa).

Positions 1-28 (MKFGSKIRRLAVAAVAGAIALGASFAVA) are cleaved as a signal peptide.

This chain is 31 kDa immunogenic protein (bcsP31), found in Brucella abortus biovar 1 (strain 9-941).